The sequence spans 117 residues: cAMP-regulated phosphoprotein 19-A (117 aa).

The segment covering M1–L37 has biased composition (basic and acidic residues). A disordered region spans residues M1–L54. Residue S28 is modified to Phosphoserine; by CDK2. At S67 the chain carries Phosphoserine; by GWL. Residues K78–G117 are disordered. The residue at position 99 (T99) is a Phosphothreonine; by CDK2. S109 carries the phosphoserine; by PKA modification.

It belongs to the endosulfine family. In terms of assembly, interacts (when phosphorylated at Ser-67) with ppp2r2d. In terms of processing, phosphorylation at Ser-67 by gwl during mitosis is essential for interaction with ppp2r2d (PR55-delta) and subsequent inactivation of PP2A. Phosphorylated by PKA.

The protein localises to the cytoplasm. In terms of biological role, protein phosphatase inhibitor that specifically inhibits protein phosphatase 2A (PP2A) during mitosis. When phosphorylated at Ser-67 during mitosis, specifically interacts with ppp2r2d (PR55-delta) and inhibits its activity, leading to inactivation of PP2A, an essential condition to keep cyclin-B1-CDK1 activity high during M phase. The sequence is that of cAMP-regulated phosphoprotein 19-A (arpp19-a) from Xenopus laevis (African clawed frog).